Reading from the N-terminus, the 298-residue chain is Elongation factor Ts (298 aa).

Positions 79–82 (TDFV) are involved in Mg(2+) ion dislocation from EF-Tu.

Belongs to the EF-Ts family.

The protein localises to the cytoplasm. Associates with the EF-Tu.GDP complex and induces the exchange of GDP to GTP. It remains bound to the aminoacyl-tRNA.EF-Tu.GTP complex up to the GTP hydrolysis stage on the ribosome. The chain is Elongation factor Ts (tsf) from Mycoplasma pneumoniae (strain ATCC 29342 / M129 / Subtype 1) (Mycoplasmoides pneumoniae).